The chain runs to 303 residues: Endo-1,3;1,4-beta-D-glucanase (303 aa).

A signal peptide spans 1–43; the sequence is MPSSAQVLLCLAAVLAAAAATTAEAHSQCLDNPPDRSIHGRQL. N-linked (GlcNAc...) asparagine glycosylation is found at N115, N197, and N257.

Glycosylated.

The protein resides in the secreted. Its function is as follows. Plays a role in control of plant growth. Mediates specific degradation of cell wall (1,3)(1,4)-beta-D-glucans and is related to auxin-mediated growth and development of cereal coleoptiles. This Zea mays (Maize) protein is Endo-1,3;1,4-beta-D-glucanase.